Consider the following 79-residue polypeptide: U16-theraphotoxin-Cg1a (79 aa).

A signal peptide spans 1–19; that stretch reads MRALLIIAGLALFLVVCNA. A propeptide spanning residues 20-44 is cleaved from the precursor; the sequence is SQVNEQRKLNEMLSVMFAVEEPQER. 3 disulfides stabilise this stretch: cysteine 47-cysteine 62, cysteine 54-cysteine 67, and cysteine 61-cysteine 74.

This sequence belongs to the neurotoxin 10 (Hwtx-1) family. 34 (Jztx-26) subfamily. As to expression, expressed by the venom gland.

It is found in the secreted. In terms of biological role, probable ion channel inhibitor. The protein is U16-theraphotoxin-Cg1a of Chilobrachys guangxiensis (Chinese earth tiger tarantula).